We begin with the raw amino-acid sequence, 335 residues long: Flagellar P-ring protein (335 aa).

An N-terminal signal peptide occupies residues 1–24; the sequence is MNKITNFLILSAVLFFSLIESANA.

Belongs to the FlgI family. The basal body constitutes a major portion of the flagellar organelle and consists of four rings (L,P,S, and M) mounted on a central rod.

Its subcellular location is the periplasm. The protein localises to the bacterial flagellum basal body. Functionally, assembles around the rod to form the L-ring and probably protects the motor/basal body from shearing forces during rotation. The chain is Flagellar P-ring protein from Bdellovibrio bacteriovorus (strain ATCC 15356 / DSM 50701 / NCIMB 9529 / HD100).